A 363-amino-acid chain; its full sequence is MTNSAPVTPRRDLADAPLLAAARGETPRHTPVWFMRQAGRSLPEYRKVREGIPMLQSCLTPDLVCEITAQPVRRHGVDAAILFSDIVLPLHAAGVGLDIVAGTGPVVAEPVRTAADVAALPSLAPEQVSKVGDAVGLLLDELGSTPLIGFAGAPFTLASYLVEGGPSRNHERTKALMHSEPATWHALLEKLADTTLTFLRTQLAAGVDAIQLFDSWAGALSLRDYREFVLPHSRRIFEGVAETPGAAGVPKIHFGVGTGELLGAMRSAGADVVGVDWRVPLDTAAQRLREAGPDQGAPVVQGNLDPAVLFAGWEAVEREVRRILAEGRAAGGHIFNLGHGVLPSTDPGVLTRVVELVHAESAR.

Substrate is bound by residues 36-40 (RQAGR), Asp85, Tyr160, Ser215, and His339.

The protein belongs to the uroporphyrinogen decarboxylase family. In terms of assembly, homodimer.

It is found in the cytoplasm. The enzyme catalyses uroporphyrinogen III + 4 H(+) = coproporphyrinogen III + 4 CO2. Its pathway is porphyrin-containing compound metabolism; protoporphyrin-IX biosynthesis; coproporphyrinogen-III from 5-aminolevulinate: step 4/4. Functionally, catalyzes the decarboxylation of four acetate groups of uroporphyrinogen-III to yield coproporphyrinogen-III. This Saccharopolyspora erythraea (strain ATCC 11635 / DSM 40517 / JCM 4748 / NBRC 13426 / NCIMB 8594 / NRRL 2338) protein is Uroporphyrinogen decarboxylase.